We begin with the raw amino-acid sequence, 572 residues long: Sulfite reductase [NADPH] hemoprotein beta-component (572 aa).

4 residues coordinate [4Fe-4S] cluster: Cys-437, Cys-443, Cys-482, and Cys-486. Residue Cys-486 participates in siroheme binding.

The protein belongs to the nitrite and sulfite reductase 4Fe-4S domain family. Alpha(8)-beta(8). The alpha component is a flavoprotein, the beta component is a hemoprotein. The cofactor is siroheme. Requires [4Fe-4S] cluster as cofactor.

It carries out the reaction hydrogen sulfide + 3 NADP(+) + 3 H2O = sulfite + 3 NADPH + 4 H(+). The protein operates within sulfur metabolism; hydrogen sulfide biosynthesis; hydrogen sulfide from sulfite (NADPH route): step 1/1. Component of the sulfite reductase complex that catalyzes the 6-electron reduction of sulfite to sulfide. This is one of several activities required for the biosynthesis of L-cysteine from sulfate. The protein is Sulfite reductase [NADPH] hemoprotein beta-component of Staphylococcus epidermidis (strain ATCC 35984 / DSM 28319 / BCRC 17069 / CCUG 31568 / BM 3577 / RP62A).